A 201-amino-acid chain; its full sequence is Protein GrpE (201 aa).

This sequence belongs to the GrpE family. As to quaternary structure, homodimer.

It is found in the cytoplasm. In terms of biological role, participates actively in the response to hyperosmotic and heat shock by preventing the aggregation of stress-denatured proteins, in association with DnaK and GrpE. It is the nucleotide exchange factor for DnaK and may function as a thermosensor. Unfolded proteins bind initially to DnaJ; upon interaction with the DnaJ-bound protein, DnaK hydrolyzes its bound ATP, resulting in the formation of a stable complex. GrpE releases ADP from DnaK; ATP binding to DnaK triggers the release of the substrate protein, thus completing the reaction cycle. Several rounds of ATP-dependent interactions between DnaJ, DnaK and GrpE are required for fully efficient folding. This Shewanella denitrificans (strain OS217 / ATCC BAA-1090 / DSM 15013) protein is Protein GrpE.